Consider the following 1193-residue polypeptide: Probable DNA-directed RNA polymerase II subunit RPB2 homolog (1193 aa).

Aspartate 808 is a binding site for Mg(2+). Zn(2+) is bound by residues cysteine 1137, cysteine 1140, cysteine 1155, and cysteine 1158. The C4-type zinc-finger motif lies at 1137–1158; it reads CVPCKSYFKVVKTQNGFFCSGC.

Belongs to the RNA polymerase beta chain family.

It catalyses the reaction RNA(n) + a ribonucleoside 5'-triphosphate = RNA(n+1) + diphosphate. Component of the DNA-dependent RNA polymerase that catalyzes the transcription of DNA into RNA using the four ribonucleoside triphosphates as substrates. Second largest component of RNA polymerase II which synthesizes mRNA precursors and many functional non-coding RNAs. Proposed to contribute to the polymerase catalytic activity and forms the polymerase active center together with the largest subunit. The chain is Probable DNA-directed RNA polymerase II subunit RPB2 homolog from Invertebrate iridescent virus 6 (IIV-6).